A 247-amino-acid polypeptide reads, in one-letter code: GTP cyclohydrolase 1 type 2 homolog (247 aa).

Residues histidine 63, histidine 64, aspartate 101, histidine 215, and glutamate 219 each contribute to the a divalent metal cation site.

Belongs to the GTP cyclohydrolase I type 2/NIF3 family. Homohexamer.

This is GTP cyclohydrolase 1 type 2 homolog from Buchnera aphidicola subsp. Acyrthosiphon pisum (strain APS) (Acyrthosiphon pisum symbiotic bacterium).